The chain runs to 690 residues: Elongation factor G (690 aa).

Residues 8 to 282 (KMTRNIGIMA…AVIDYLPSPL (275 aa)) enclose the tr-type G domain. Residues 17–24 (AHIDAGKT), 81–85 (DTPGH), and 135–138 (NKMD) contribute to the GTP site.

This sequence belongs to the TRAFAC class translation factor GTPase superfamily. Classic translation factor GTPase family. EF-G/EF-2 subfamily.

It is found in the cytoplasm. In terms of biological role, catalyzes the GTP-dependent ribosomal translocation step during translation elongation. During this step, the ribosome changes from the pre-translocational (PRE) to the post-translocational (POST) state as the newly formed A-site-bound peptidyl-tRNA and P-site-bound deacylated tRNA move to the P and E sites, respectively. Catalyzes the coordinated movement of the two tRNA molecules, the mRNA and conformational changes in the ribosome. This Acholeplasma laidlawii (strain PG-8A) protein is Elongation factor G.